Reading from the N-terminus, the 225-residue chain is Protein-L-isoaspartate O-methyltransferase (225 aa).

S-adenosyl-L-homocysteine-binding positions include 57–60 (ATVS), histidine 65, serine 89, 110–111 (EH), 142–143 (DG), threonine 216, and glutamine 221. Residue serine 60 is part of the active site.

It belongs to the methyltransferase superfamily. L-isoaspartyl/D-aspartyl protein methyltransferase family. In terms of assembly, monomer.

It is found in the cytoplasm. The protein localises to the cytosol. It catalyses the reaction [protein]-L-isoaspartate + S-adenosyl-L-methionine = [protein]-L-isoaspartate alpha-methyl ester + S-adenosyl-L-homocysteine. Its function is as follows. Initiates the repair of damaged proteins by catalyzing methyl esterification of L-isoaspartyl and D-aspartyl residues produced by spontaneous isomerization and racemization of L-aspartyl and L-asparaginyl residues in aging peptides and proteins. The polypeptide is Protein-L-isoaspartate O-methyltransferase (pcm-1) (Caenorhabditis elegans).